Consider the following 304-residue polypeptide: MAGRSERLVITGAGGQLGSHLTAQAAREGRDMLALTSSQWDITDPAAAERIIRHGDVVINCAAYTDVDGAESNEAVAYAVNATGPQHLARACARVGARLIHVSTDYVFDGDFGGAEPRPYEPTDETAPQGVYARSKLAGEQAVLAAFPEAAVVRTAWVYTGGTGKDFVAVMRRLAAGHGRVDVVDDQTGSPTYVADLAEALLALADAGVRGRVLHAANEGVVSRFGQARAVFEECGADPQRVRPVSSAQFPRPAPRSSYSALSSRQWALAGLTPLRHWRSALATALAAPANSTSIDRRLPSTRD.

NADH contacts are provided by residues 15-17, 41-42, and 63-65; these read GQL, DI, and AYT. NADPH-binding positions include 16-17, 41-42, and 63-65; these read QL, DI, and AYT. Residue 104-105 participates in dTDP-beta-L-rhamnose binding; sequence TD. Residues Tyr132 and Lys136 each contribute to the NADH site. NADPH is bound by residues Tyr132 and Lys136. The active-site Proton donor/acceptor is the Tyr132. Trp157 provides a ligand contact to dTDP-beta-L-rhamnose.

Belongs to the dTDP-4-dehydrorhamnose reductase family. It depends on Mg(2+) as a cofactor.

It carries out the reaction dTDP-beta-L-rhamnose + NADP(+) = dTDP-4-dehydro-beta-L-rhamnose + NADPH + H(+). It functions in the pathway carbohydrate biosynthesis; dTDP-L-rhamnose biosynthesis. Involved in the biosynthesis of the dTDP-L-rhamnose which is a component of the critical linker, D-N-acetylglucosamine-L-rhamnose disaccharide, which connects the galactan region of arabinogalactan to peptidoglycan via a phosphodiester linkage. Catalyzes the reduction of dTDP-6-deoxy-L-lyxo-4-hexulose to yield dTDP-L-rhamnose. The protein is dTDP-4-dehydrorhamnose reductase of Mycobacterium tuberculosis (strain CDC 1551 / Oshkosh).